Here is a 321-residue protein sequence, read N- to C-terminus: tRNA(Ile)-lysidine synthase (321 aa).

Position 30 to 35 (30 to 35) interacts with ATP; the sequence is SGGSDS.

Belongs to the tRNA(Ile)-lysidine synthase family.

It localises to the cytoplasm. It carries out the reaction cytidine(34) in tRNA(Ile2) + L-lysine + ATP = lysidine(34) in tRNA(Ile2) + AMP + diphosphate + H(+). Its function is as follows. Ligates lysine onto the cytidine present at position 34 of the AUA codon-specific tRNA(Ile) that contains the anticodon CAU, in an ATP-dependent manner. Cytidine is converted to lysidine, thus changing the amino acid specificity of the tRNA from methionine to isoleucine. This Chlamydia muridarum (strain MoPn / Nigg) protein is tRNA(Ile)-lysidine synthase.